Consider the following 462-residue polypeptide: MTKQKTWSDRFEGSLHPAIVEFNASIGFDIELIEYDLTGSIAHAQMLAHTGIISPEEAQKLTQGLEQIRQEYRQGEFKPGIDQEDVHFAVERRLTEIVGDVGKKLHTARSRNDQVGTDIRLYLRDQISQIRAQLREFQQVLVNHAENHIETLIPGYTHLQRAQPISLAHHLLAYFQMAQRDWERLGEIYARTNISPLGCGALAGTTFPIDRHYSAELLQFQGVYGNSLDGVSDRDFAIEFLNAASLIMVHLSRLSEEMILWSSHEFSFISLTDSCATGSSIMPQKKNPDVPELVRGKAGRVFGHLQGMLVLMKGLPLAYNKDLQEDKEAIFDGVKTVKVCLEAMTILLAEGIKFREERLAEAVSEDFSNATDVADYLAAKGIPFREAYNLVGKVVKTSSAAGKLLKDLSLEEWQALHPAFEADIYDAIAPKQVVAARNSYGGTGFEQIRQAITRAKAQLESS.

Belongs to the lyase 1 family. Argininosuccinate lyase subfamily.

The protein localises to the cytoplasm. The catalysed reaction is 2-(N(omega)-L-arginino)succinate = fumarate + L-arginine. Its pathway is amino-acid biosynthesis; L-arginine biosynthesis; L-arginine from L-ornithine and carbamoyl phosphate: step 3/3. The protein is Argininosuccinate lyase of Rippkaea orientalis (strain PCC 8801 / RF-1) (Cyanothece sp. (strain PCC 8801)).